A 252-amino-acid polypeptide reads, in one-letter code: NDR1/HIN1-like protein 6 (252 aa).

A disordered region spans residues 1–46 (MSQHQKIYPVQDPEAATARPTAPLVPRGSSRSEHGDPSKVPLNQRP). Residues 70–90 (FCFLLLLVVAVGASIGILYLV) form a helical membrane-spanning segment. Asparagine 121, asparagine 154, asparagine 166, and asparagine 180 each carry an N-linked (GlcNAc...) asparagine glycan.

Homodimer. Highly expressed in seeds and at lower level in roots and senescing leaves. Expressed in leaves and flowers.

The protein localises to the cell membrane. Its subcellular location is the cytoplasm. It is found in the cytosol. Plays an important role in the abiotic stresses-induced abscisic acid (ABA) signaling and biosynthesis. Acts as a positive regulator of ABA-mediated seed germination inhibition. Functions downstream of ABF2/AREB1, ABF4/AREB2 and ABF3. In Arabidopsis thaliana (Mouse-ear cress), this protein is NDR1/HIN1-like protein 6.